Consider the following 161-residue polypeptide: MSKQQEQDTPSFGEIRQRLQAGEDFDLAHRLQEREYEMYYNHNRNVNGTIVGDRKKTREEQIAEDEHAASLRRLGHAERSMSDEEYARQLQEEMDRLDASIQMDKEAQLREDARMAWLLQQESSATPAPSRHSGDLISFEDQPQQSSNTTTSSSCQSANNS.

Residues 1 to 10 (MSKQQEQDTP) show a composition bias toward polar residues. Disordered stretches follow at residues 1-20 (MSKQQEQDTPSFGEIRQRLQ), 55-84 (KKTREEQIAEDEHAASLRRLGHAERSMSDE), and 118-161 (LLQQ…ANNS). Residues 82–107 (SDEEYARQLQEEMDRLDASIQMDKEA) adopt a coiled-coil conformation. The span at 144–161 (QQSSNTTTSSSCQSANNS) shows a compositional bias: low complexity.

This is an uncharacterized protein from Caenorhabditis elegans.